Here is a 1115-residue protein sequence, read N- to C-terminus: Lateral signaling target protein 2 homolog (1115 aa).

Disordered stretches follow at residues 308–488 (PLGS…DSDS), 545–586 (SEDD…PSTS), 600–742 (RLPS…SLSD), and 879–1027 (VQSS…PDGK). A compositionally biased stretch (low complexity) spans 322 to 361 (NNSSSTTNTSNNNNNNTNNNNSSSGSDCTNNDKTGTTTNT). Over residues 363 to 373 (KPVERLVDHRN) the composition is skewed to basic and acidic residues. 2 stretches are compositionally biased toward low complexity: residues 374-417 (NNTT…TPTA) and 425-444 (PSHSIASTSSAATTSTNSPA). A compositionally biased stretch (acidic residues) spans 449–488 (YDDDDEDDDDDDVHADVEEDEDESGILDSDEHDLNDDSDS). Composition is skewed to low complexity over residues 558-577 (QQQQPQQQLEHHQQQLQQQQ) and 600-614 (RLPSSSSDNEPSSNN). Residues Ser603 and Ser604 each carry the phosphoserine modification. Positions 615–628 (QQMTIKSPSEQTTT) are enriched in polar residues. A compositionally biased stretch (basic residues) spans 632–655 (SNRHRHHSHHHHHHHHSHHHHHHQ). A compositionally biased stretch (low complexity) spans 658 to 676 (AAVAVAAAQDEQHNNNQPH). Residues 677 to 706 (SHSHSSSHHHHHNHQSHSHPHRANRSTRKR) are compositionally biased toward basic residues. Low complexity-rich tracts occupy residues 714–726 (TITTTKTTSGGEQ), 733–742 (DSSTASSLSD), and 881–901 (SSNSGNSSSSNSSSSSSAARS). Residue Ser908 is modified to Phosphoserine. Low complexity-rich tracts occupy residues 921-975 (QQQQ…SPVS) and 988-1020 (TTTTLSTSIGTAATTPTGATTTGVTTTTTMSPP). The FYVE-type zinc-finger motif lies at 1025-1085 (DGKAPRCMSC…VCRECFMREV (61 aa)). Zn(2+)-binding residues include Cys1031, Cys1034, Cys1047, Cys1050, Cys1055, Cys1058, Cys1077, and Cys1080. The tract at residues 1088-1115 (SHSHGQSQSQIHSPTQQAGGRPQAASAS) is disordered. The span at 1090-1100 (SHGQSQSQIHS) shows a compositional bias: low complexity.

This sequence belongs to the lst-2 family.

Functionally, negative regulator of epidermal growth factor receptor (EGFR) signaling. The polypeptide is Lateral signaling target protein 2 homolog (Drosophila grimshawi (Hawaiian fruit fly)).